A 326-amino-acid chain; its full sequence is Peroxidase 1 (326 aa).

An N-terminal signal peptide occupies residues 1–22; it reads MASSRVILALLLAAAAVMASSA. Q23 carries the pyrrolidone carboxylic acid modification. Intrachain disulfides connect C33–C112, C66–C71, C118–C322, and C196–C231. The Proton acceptor role is filled by H64. Residues D65, V68, G70, D72, and S74 each contribute to the Ca(2+) site. 2 N-linked (GlcNAc...) asparagine glycosylation sites follow: N82 and N153. P159 contributes to the substrate binding site. N164 carries an N-linked (GlcNAc...) asparagine glycan. A heme b-binding site is contributed by H189. T190 contacts Ca(2+). 2 N-linked (GlcNAc...) asparagine glycosylation sites follow: N205 and N237. Positions 244, 247, and 252 each coordinate Ca(2+).

It belongs to the peroxidase family. Classical plant (class III) peroxidase subfamily. Ca(2+) is required as a cofactor. The cofactor is heme b.

The protein localises to the secreted. The catalysed reaction is 2 a phenolic donor + H2O2 = 2 a phenolic radical donor + 2 H2O. Functionally, removal of H(2)O(2), oxidation of toxic reductants, biosynthesis and degradation of lignin, suberization, auxin catabolism, response to environmental stresses such as wounding, pathogen attack and oxidative stress. These functions might be dependent on each isozyme/isoform in each plant tissue. This Oryza sativa subsp. japonica (Rice) protein is Peroxidase 1 (PRX74).